We begin with the raw amino-acid sequence, 207 residues long: Ribosomal RNA small subunit methyltransferase G (207 aa).

S-adenosyl-L-methionine contacts are provided by residues Gly-76, Gln-81, 127-128 (VE), and Arg-141.

This sequence belongs to the methyltransferase superfamily. RNA methyltransferase RsmG family.

The protein resides in the cytoplasm. The catalysed reaction is guanosine(527) in 16S rRNA + S-adenosyl-L-methionine = N(7)-methylguanosine(527) in 16S rRNA + S-adenosyl-L-homocysteine. Functionally, specifically methylates the N7 position of guanine in position 527 of 16S rRNA. In Neisseria gonorrhoeae (strain ATCC 700825 / FA 1090), this protein is Ribosomal RNA small subunit methyltransferase G.